Reading from the N-terminus, the 465-residue chain is UDP-N-acetylmuramate--L-alanine ligase (465 aa).

112–118 (GTHGKTT) contacts ATP.

Belongs to the MurCDEF family.

The protein localises to the cytoplasm. It catalyses the reaction UDP-N-acetyl-alpha-D-muramate + L-alanine + ATP = UDP-N-acetyl-alpha-D-muramoyl-L-alanine + ADP + phosphate + H(+). It participates in cell wall biogenesis; peptidoglycan biosynthesis. Functionally, cell wall formation. The chain is UDP-N-acetylmuramate--L-alanine ligase from Burkholderia cenocepacia (strain ATCC BAA-245 / DSM 16553 / LMG 16656 / NCTC 13227 / J2315 / CF5610) (Burkholderia cepacia (strain J2315)).